The primary structure comprises 473 residues: FAD-dependent oxidoreductase dpasF (473 aa).

The first 21 residues, 1-21 (MNRLLASALLVGSAVVAPVSA), serve as a signal peptide directing secretion. Asparagine 26, asparagine 54, asparagine 92, asparagine 133, asparagine 185, asparagine 276, and asparagine 401 each carry an N-linked (GlcNAc...) asparagine glycan.

Belongs to the beta-cyclopiazonate dehydrogenase family. FAD is required as a cofactor.

The protein operates within secondary metabolite biosynthesis; terpenoid biosynthesis. In terms of biological role, FAD-dependent oxidoreductase; part of the gene cluster that mediates the biosynthesis of the diterpenoid pyrones subglutinols A and B. The first step of the pathway is the synthesis of the alpha-pyrone moiety by the polyketide synthase dpasA via condensation of one acetyl-CoA starter unit with 3 malonyl-CoA units and 2 methylations. The alpha-pyrone is then combined with geranylgeranyl pyrophosphate (GGPP) formed by the GGPP synthase dpasD through the action of the prenyltransferase dpasC to yield a linear alpha-pyrone diterpenoid. Subsequent steps in the diterpenoid pyrone biosynthetic pathway involve the decalin core formation, which is initiated by the epoxidation of the C10-C11 olefin by the FAD-dependent oxidoreductase dpasE, and is followed by a cyclization cascade catalyzed by the terpene cyclase dpasB. The FAD-linked oxidoreductase dpasF is then involved in tetrahydrofuran (THF) ring formation at the C5 unit to complete the formation of subglutinols A and B. DpasF possesses also an additional catalytic ability of multi-step oxidations to generate a new DDP analog with an enone system at the C5 named FDDP A. The sequence is that of FAD-dependent oxidoreductase dpasF from Apiospora sacchari (Arthrinium sacchari).